The following is a 122-amino-acid chain: Large ribosomal subunit protein uL14 (122 aa).

It belongs to the universal ribosomal protein uL14 family. Part of the 50S ribosomal subunit. Forms a cluster with proteins L3 and L19. In the 70S ribosome, L14 and L19 interact and together make contacts with the 16S rRNA in bridges B5 and B8.

Functionally, binds to 23S rRNA. Forms part of two intersubunit bridges in the 70S ribosome. The chain is Large ribosomal subunit protein uL14 from Phytoplasma mali (strain AT).